The primary structure comprises 334 residues: Beta-ketoacyl-[acyl-carrier-protein] synthase III (334 aa).

Active-site residues include C114 and H253. The segment at 254 to 258 (QANIR) is ACP-binding. Residue N283 is part of the active site.

Belongs to the thiolase-like superfamily. FabH family. Homodimer.

Its subcellular location is the cytoplasm. The enzyme catalyses malonyl-[ACP] + acetyl-CoA + H(+) = 3-oxobutanoyl-[ACP] + CO2 + CoA. The protein operates within lipid metabolism; fatty acid biosynthesis. In terms of biological role, catalyzes the condensation reaction of fatty acid synthesis by the addition to an acyl acceptor of two carbons from malonyl-ACP. Catalyzes the first condensation reaction which initiates fatty acid synthesis and may therefore play a role in governing the total rate of fatty acid production. Possesses both acetoacetyl-ACP synthase and acetyl transacylase activities. Its substrate specificity determines the biosynthesis of branched-chain and/or straight-chain of fatty acids. This is Beta-ketoacyl-[acyl-carrier-protein] synthase III from Campylobacter curvus (strain 525.92).